Consider the following 136-residue polypeptide: Large ribosomal subunit protein uL22 (136 aa).

Belongs to the universal ribosomal protein uL22 family. In terms of assembly, part of the 50S ribosomal subunit.

In terms of biological role, this protein binds specifically to 23S rRNA; its binding is stimulated by other ribosomal proteins, e.g. L4, L17, and L20. It is important during the early stages of 50S assembly. It makes multiple contacts with different domains of the 23S rRNA in the assembled 50S subunit and ribosome. Its function is as follows. The globular domain of the protein is located near the polypeptide exit tunnel on the outside of the subunit, while an extended beta-hairpin is found that lines the wall of the exit tunnel in the center of the 70S ribosome. The sequence is that of Large ribosomal subunit protein uL22 from Bacteroides fragilis (strain ATCC 25285 / DSM 2151 / CCUG 4856 / JCM 11019 / LMG 10263 / NCTC 9343 / Onslow / VPI 2553 / EN-2).